The chain runs to 355 residues: Epoxyqueuosine reductase (355 aa).

Catalysis depends on aspartate 143, which acts as the Proton donor. One can recognise a 4Fe-4S ferredoxin-type domain in the interval 185-217 (LPLPIDTPATAHCGTCTRCIDICPTQAIIAPHR). 8 residues coordinate [4Fe-4S] cluster: cysteine 197, cysteine 200, cysteine 203, cysteine 207, cysteine 223, cysteine 250, cysteine 253, and cysteine 257.

It belongs to the QueG family. As to quaternary structure, monomer. Cob(II)alamin serves as cofactor. The cofactor is [4Fe-4S] cluster.

It is found in the cytoplasm. The catalysed reaction is epoxyqueuosine(34) in tRNA + AH2 = queuosine(34) in tRNA + A + H2O. The protein operates within tRNA modification; tRNA-queuosine biosynthesis. Catalyzes the conversion of epoxyqueuosine (oQ) to queuosine (Q), which is a hypermodified base found in the wobble positions of tRNA(Asp), tRNA(Asn), tRNA(His) and tRNA(Tyr). This Xanthomonas campestris pv. campestris (strain ATCC 33913 / DSM 3586 / NCPPB 528 / LMG 568 / P 25) protein is Epoxyqueuosine reductase.